A 202-amino-acid chain; its full sequence is Small ribosomal subunit protein uS5 (202 aa).

An S5 DRBM domain is found at 50–113 (LKQELLNVNI…REAKLNLIPV (64 aa)).

The protein belongs to the universal ribosomal protein uS5 family. As to quaternary structure, part of the 30S ribosomal subunit. Contacts protein S4.

With S4 and S12 plays an important role in translational accuracy. The polypeptide is Small ribosomal subunit protein uS5 (Pyrobaculum arsenaticum (strain DSM 13514 / JCM 11321 / PZ6)).